Here is a 178-residue protein sequence, read N- to C-terminus: 2-C-methyl-D-erythritol 2,4-cyclodiphosphate synthase (178 aa).

D24, H26, and H61 together coordinate a divalent metal cation. Position 24 to 26 (24 to 26 (DSH)) interacts with 4-CDP-2-C-methyl-D-erythritol 2-phosphate. 150 to 153 (TSGE) is a binding site for 4-CDP-2-C-methyl-D-erythritol 2-phosphate.

Belongs to the IspF family. As to quaternary structure, homotrimer. A divalent metal cation is required as a cofactor.

It catalyses the reaction 4-CDP-2-C-methyl-D-erythritol 2-phosphate = 2-C-methyl-D-erythritol 2,4-cyclic diphosphate + CMP. Its pathway is isoprenoid biosynthesis; isopentenyl diphosphate biosynthesis via DXP pathway; isopentenyl diphosphate from 1-deoxy-D-xylulose 5-phosphate: step 4/6. In terms of biological role, involved in the biosynthesis of isopentenyl diphosphate (IPP) and dimethylallyl diphosphate (DMAPP), two major building blocks of isoprenoid compounds. Catalyzes the conversion of 4-diphosphocytidyl-2-C-methyl-D-erythritol 2-phosphate (CDP-ME2P) to 2-C-methyl-D-erythritol 2,4-cyclodiphosphate (ME-CPP) with a corresponding release of cytidine 5-monophosphate (CMP). This chain is 2-C-methyl-D-erythritol 2,4-cyclodiphosphate synthase, found in Chlamydia trachomatis serovar A (strain ATCC VR-571B / DSM 19440 / HAR-13).